The primary structure comprises 105 residues: Nucleoid-associated protein lin2851 (105 aa).

Residues 1 to 16 (MRGMGNMQGMMKQMQK) are compositionally biased toward low complexity. Residues 1–23 (MRGMGNMQGMMKQMQKMQKEMAK) are disordered.

It belongs to the YbaB/EbfC family. Homodimer.

The protein resides in the cytoplasm. The protein localises to the nucleoid. In terms of biological role, binds to DNA and alters its conformation. May be involved in regulation of gene expression, nucleoid organization and DNA protection. This chain is Nucleoid-associated protein lin2851, found in Listeria innocua serovar 6a (strain ATCC BAA-680 / CLIP 11262).